The primary structure comprises 1402 residues: DNA-directed RNA polymerase subunit beta' (1402 aa).

Residues Cys71, Cys73, Cys86, and Cys89 each coordinate Zn(2+). Mg(2+) is bound by residues Asp462, Asp464, and Asp466. 4 residues coordinate Zn(2+): Cys811, Cys885, Cys892, and Cys895.

It belongs to the RNA polymerase beta' chain family. The RNAP catalytic core consists of 2 alpha, 1 beta, 1 beta' and 1 omega subunit. When a sigma factor is associated with the core the holoenzyme is formed, which can initiate transcription. It depends on Mg(2+) as a cofactor. Zn(2+) serves as cofactor.

It catalyses the reaction RNA(n) + a ribonucleoside 5'-triphosphate = RNA(n+1) + diphosphate. In terms of biological role, DNA-dependent RNA polymerase catalyzes the transcription of DNA into RNA using the four ribonucleoside triphosphates as substrates. The chain is DNA-directed RNA polymerase subunit beta' from Bartonella henselae (strain ATCC 49882 / DSM 28221 / CCUG 30454 / Houston 1) (Rochalimaea henselae).